A 258-amino-acid chain; its full sequence is Regulatory protein RecX (258 aa).

The protein belongs to the RecX family.

It localises to the cytoplasm. In terms of biological role, modulates RecA activity. The chain is Regulatory protein RecX from Streptococcus pneumoniae (strain P1031).